A 263-amino-acid polypeptide reads, in one-letter code: Endonuclease 8 (263 aa).

The Schiff-base intermediate with DNA role is filled by Pro2. Residue Glu3 is the Proton donor of the active site. Lys53 functions as the Proton donor; for beta-elimination activity in the catalytic mechanism. 3 residues coordinate DNA: Gln70, Arg125, and Asn169. An FPG-type zinc finger spans residues 229–263 (KVFHRDGELCERCGGIIEKTTLSSRPFYWCPGCQH). The Proton donor; for delta-elimination activity role is filled by Arg253.

The protein belongs to the FPG family. Zn(2+) serves as cofactor.

It carries out the reaction 2'-deoxyribonucleotide-(2'-deoxyribose 5'-phosphate)-2'-deoxyribonucleotide-DNA = a 3'-end 2'-deoxyribonucleotide-(2,3-dehydro-2,3-deoxyribose 5'-phosphate)-DNA + a 5'-end 5'-phospho-2'-deoxyribonucleoside-DNA + H(+). Its function is as follows. Involved in base excision repair of DNA damaged by oxidation or by mutagenic agents. Acts as a DNA glycosylase that recognizes and removes damaged bases. Has a preference for oxidized pyrimidines, such as thymine glycol, 5,6-dihydrouracil and 5,6-dihydrothymine. Has AP (apurinic/apyrimidinic) lyase activity and introduces nicks in the DNA strand. Cleaves the DNA backbone by beta-delta elimination to generate a single-strand break at the site of the removed base with both 3'- and 5'-phosphates. This chain is Endonuclease 8, found in Escherichia coli (strain 55989 / EAEC).